Consider the following 257-residue polypeptide: UPF0246 protein BPP3440 (257 aa).

This sequence belongs to the UPF0246 family.

This chain is UPF0246 protein BPP3440, found in Bordetella parapertussis (strain 12822 / ATCC BAA-587 / NCTC 13253).